Reading from the N-terminus, the 427-residue chain is Glutamate-1-semialdehyde 2,1-aminomutase (427 aa).

Lysine 267 is subject to N6-(pyridoxal phosphate)lysine.

The protein belongs to the class-III pyridoxal-phosphate-dependent aminotransferase family. HemL subfamily. As to quaternary structure, homodimer. Pyridoxal 5'-phosphate serves as cofactor.

The protein localises to the cytoplasm. The catalysed reaction is (S)-4-amino-5-oxopentanoate = 5-aminolevulinate. Its pathway is porphyrin-containing compound metabolism; protoporphyrin-IX biosynthesis; 5-aminolevulinate from L-glutamyl-tRNA(Glu): step 2/2. This Geobacter sulfurreducens (strain ATCC 51573 / DSM 12127 / PCA) protein is Glutamate-1-semialdehyde 2,1-aminomutase.